Here is a 423-residue protein sequence, read N- to C-terminus: Peroxisomal membrane protein PMP47A (423 aa).

3 Solcar repeats span residues 6-120, 142-230, and 239-373; these read YDDL…TGKT, LSVW…LKSF, and ITPV…LLIL. The chain crosses the membrane as a helical span at residues 12–32; sequence AFAGAGGGLLSMTLTYPLVTL. The segment covering 43-53 has biased composition (basic and acidic residues); it reads KKDQEKEKENS. The disordered stretch occupies residues 43–70; the sequence is KKDQEKEKENSNEDGSLSPKSSNTSDVS. Over residues 55-70 the composition is skewed to polar residues; that stretch reads EDGSLSPKSSNTSDVS. 4 consecutive transmembrane segments (helical) span residues 98–118, 148–168, 204–224, and 245–265; these read SALF…ELTG, MAAG…IWVA, FTGI…YTIF, and LLLG…YITL. The interval 278-308 is disordered; that stretch reads SEDVEKERTDSVQSLPEDGSDEDNLKENSAK. A helical membrane pass occupies residues 353–373; sequence LLQSILNAAFLFYFKEELLIL.

This sequence belongs to the mitochondrial carrier (TC 2.A.29) family.

The protein localises to the peroxisome membrane. Its function is as follows. May have transport activity. The polypeptide is Peroxisomal membrane protein PMP47A (PMP47A) (Candida boidinii (Yeast)).